We begin with the raw amino-acid sequence, 368 residues long: Aminomethyltransferase (368 aa).

It belongs to the GcvT family. In terms of assembly, the glycine cleavage system is composed of four proteins: P, T, L and H.

It catalyses the reaction N(6)-[(R)-S(8)-aminomethyldihydrolipoyl]-L-lysyl-[protein] + (6S)-5,6,7,8-tetrahydrofolate = N(6)-[(R)-dihydrolipoyl]-L-lysyl-[protein] + (6R)-5,10-methylene-5,6,7,8-tetrahydrofolate + NH4(+). In terms of biological role, the glycine cleavage system catalyzes the degradation of glycine. The polypeptide is Aminomethyltransferase (Alkaliphilus oremlandii (strain OhILAs) (Clostridium oremlandii (strain OhILAs))).